Reading from the N-terminus, the 123-residue chain is MARIAGVDLPKDKRAEIALTYIYGIGKPTAQKILAQTGVNPDTRIKDLTEEEVNKLRDYIDKNTKVEGDLRREVALNIKRLIEIGCYRGIRHRRGLPVRGQRTKTNARTRKGPKKTVGARRKK.

The disordered stretch occupies residues 96–123 (LPVRGQRTKTNARTRKGPKKTVGARRKK).

Belongs to the universal ribosomal protein uS13 family. Part of the 30S ribosomal subunit. Forms a loose heterodimer with protein S19. Forms two bridges to the 50S subunit in the 70S ribosome.

Located at the top of the head of the 30S subunit, it contacts several helices of the 16S rRNA. In the 70S ribosome it contacts the 23S rRNA (bridge B1a) and protein L5 of the 50S subunit (bridge B1b), connecting the 2 subunits; these bridges are implicated in subunit movement. Contacts the tRNAs in the A and P-sites. The chain is Small ribosomal subunit protein uS13 from Desulforamulus reducens (strain ATCC BAA-1160 / DSM 100696 / MI-1) (Desulfotomaculum reducens).